A 431-amino-acid polypeptide reads, in one-letter code: Ribosome assembly protein SQT1 (431 aa).

WD repeat units follow at residues 63 to 102 (KHTD…PKFA), 107 to 146 (GYGE…AQWK), 149 to 192 (SQMQ…GSLE), 199 to 243 (VHQQ…QLFK), 309 to 348 (ELDA…VRHK), and 350 to 387 (VLED…EKFV).

Interacts strongly with QSR1. Part of an oligomeric protein complex that is loosely associated with ribosomes.

May be involved in the late step of 60S ribosomal subunit assembly or modification in the cytoplasm. This Saccharomyces cerevisiae (strain ATCC 204508 / S288c) (Baker's yeast) protein is Ribosome assembly protein SQT1 (SQT1).